We begin with the raw amino-acid sequence, 258 residues long: Phosphoribosylaminoimidazole-succinocarboxamide synthase (258 aa).

This sequence belongs to the SAICAR synthetase family.

The enzyme catalyses 5-amino-1-(5-phospho-D-ribosyl)imidazole-4-carboxylate + L-aspartate + ATP = (2S)-2-[5-amino-1-(5-phospho-beta-D-ribosyl)imidazole-4-carboxamido]succinate + ADP + phosphate + 2 H(+). Its pathway is purine metabolism; IMP biosynthesis via de novo pathway; 5-amino-1-(5-phospho-D-ribosyl)imidazole-4-carboxamide from 5-amino-1-(5-phospho-D-ribosyl)imidazole-4-carboxylate: step 1/2. This Sphingopyxis alaskensis (strain DSM 13593 / LMG 18877 / RB2256) (Sphingomonas alaskensis) protein is Phosphoribosylaminoimidazole-succinocarboxamide synthase.